Here is a 505-residue protein sequence, read N- to C-terminus: Nostrin (505 aa).

The F-BAR domain occupies 1-260 (MRDPLTDCSY…AISKIDIEKD (260 aa)). Coiled coils occupy residues 101–128 (AHQVLSAHEKKRKSLENEVEKTANLVIS), 160–222 (ITTE…RIQL), and 295–332 (KERQTSSIKSKLLRLQKDIEKASRDQEGLERMLRAYSS). Residue Ser-114 is modified to Phosphoserine. The 81-residue stretch at 292 to 372 (AMSKERQTSS…SYKLSSVLAE (81 aa)) folds into the REM-1 domain. The region spanning 437–496 (LGNGLCKALYPFQARQDDELDLEKGDIVTIHKKKDEGWWFGSLKGKKGHFPAAYVEELPL) is the SH3 domain. Ser-478 is subject to Phosphoserine.

In terms of assembly, homotrimer. Interacts with DAB2. Interacts with NOS3, DNM2, WASL and CAV1. Interacts (via SH3 domain) with DNM2; this interaction allows the recruitment of NOS3 to dynamin-positive structures. Present in pulmonary arterial endothelial cells (at protein level).

It is found in the cell membrane. The protein resides in the cytoplasmic vesicle. It localises to the cytoplasm. Its subcellular location is the cytoskeleton. Its function is as follows. Multivalent adapter protein which may decrease NOS3 activity by inducing its translocation away from the plasma membrane. The polypeptide is Nostrin (Bos taurus (Bovine)).